A 141-amino-acid polypeptide reads, in one-letter code: Transcription antitermination protein NusB (141 aa).

The protein belongs to the NusB family.

Involved in transcription antitermination. Required for transcription of ribosomal RNA (rRNA) genes. Binds specifically to the boxA antiterminator sequence of the ribosomal RNA (rrn) operons. The sequence is that of Transcription antitermination protein NusB from Neisseria gonorrhoeae (strain ATCC 700825 / FA 1090).